A 193-amino-acid chain; its full sequence is Holliday junction branch migration complex subunit RuvA (193 aa).

The segment at 1–63 (MIAHIQGKLV…EDSHSLYGFA (63 aa)) is domain I. Residues 64 to 142 (EKSEKEIFKL…KLYDLDQVSI (79 aa)) are domain II. Residues 143-145 (SQS) form a flexible linker region. The tract at residues 145 to 193 (SNTNKDEALSALEVLGFIRKSAEKVVEKIVATMPDATVETIIKQALKNL) is domain III.

Belongs to the RuvA family. Homotetramer. Forms an RuvA(8)-RuvB(12)-Holliday junction (HJ) complex. HJ DNA is sandwiched between 2 RuvA tetramers; dsDNA enters through RuvA and exits via RuvB. An RuvB hexamer assembles on each DNA strand where it exits the tetramer. Each RuvB hexamer is contacted by two RuvA subunits (via domain III) on 2 adjacent RuvB subunits; this complex drives branch migration. In the full resolvosome a probable DNA-RuvA(4)-RuvB(12)-RuvC(2) complex forms which resolves the HJ.

It localises to the cytoplasm. In terms of biological role, the RuvA-RuvB-RuvC complex processes Holliday junction (HJ) DNA during genetic recombination and DNA repair, while the RuvA-RuvB complex plays an important role in the rescue of blocked DNA replication forks via replication fork reversal (RFR). RuvA specifically binds to HJ cruciform DNA, conferring on it an open structure. The RuvB hexamer acts as an ATP-dependent pump, pulling dsDNA into and through the RuvAB complex. HJ branch migration allows RuvC to scan DNA until it finds its consensus sequence, where it cleaves and resolves the cruciform DNA. The protein is Holliday junction branch migration complex subunit RuvA of Flavobacterium psychrophilum (strain ATCC 49511 / DSM 21280 / CIP 103535 / JIP02/86).